The chain runs to 216 residues: Probable nicotinate-nucleotide adenylyltransferase (216 aa).

Belongs to the NadD family.

It carries out the reaction nicotinate beta-D-ribonucleotide + ATP + H(+) = deamido-NAD(+) + diphosphate. The protein operates within cofactor biosynthesis; NAD(+) biosynthesis; deamido-NAD(+) from nicotinate D-ribonucleotide: step 1/1. Functionally, catalyzes the reversible adenylation of nicotinate mononucleotide (NaMN) to nicotinic acid adenine dinucleotide (NaAD). The sequence is that of Probable nicotinate-nucleotide adenylyltransferase from Desulfatibacillum aliphaticivorans.